Reading from the N-terminus, the 162-residue chain is Iron-sulfur cluster assembly protein IscU (162 aa).

This sequence belongs to the NifU family. As to quaternary structure, homotrimer. Small proportion is monomeric. Interacts with IscS. Interacts with ABCB6. Component of a complex, at least composed of IscS, Isd11 and IscU. Requires [4Fe-4S] cluster as cofactor.

It localises to the mitochondrion. The protein operates within cofactor biosynthesis; iron-sulfur cluster biosynthesis. Functionally, participates in iron-sulfur cluster formation (ISC) pathway for iron-sulfur (Fe-S) cluster biogenesis. Plays a role of a major scaffold protein for [Fe-S] assembly; assembles [4Fe-4S] clusters directly upon interaction with the catalytic component IscS-Isd11 as part of the scaffold complex. Can transfer [4Fe-4S] clusters to target apo-proteins. This chain is Iron-sulfur cluster assembly protein IscU, found in Plasmodium falciparum (isolate 3D7).